The sequence spans 311 residues: 4-hydroxy-tetrahydrodipicolinate synthase (311 aa).

Thr49 contacts pyruvate. The Proton donor/acceptor role is filled by Tyr138. Residue Lys166 is the Schiff-base intermediate with substrate of the active site. Val207 serves as a coordination point for pyruvate.

It belongs to the DapA family. Homotetramer; dimer of dimers.

It localises to the cytoplasm. The enzyme catalyses L-aspartate 4-semialdehyde + pyruvate = (2S,4S)-4-hydroxy-2,3,4,5-tetrahydrodipicolinate + H2O + H(+). The protein operates within amino-acid biosynthesis; L-lysine biosynthesis via DAP pathway; (S)-tetrahydrodipicolinate from L-aspartate: step 3/4. In terms of biological role, catalyzes the condensation of (S)-aspartate-beta-semialdehyde [(S)-ASA] and pyruvate to 4-hydroxy-tetrahydrodipicolinate (HTPA). The protein is 4-hydroxy-tetrahydrodipicolinate synthase of Lactobacillus helveticus (strain DPC 4571).